Reading from the N-terminus, the 273-residue chain is Thiazole synthase (273 aa).

Lys110 serves as the catalytic Schiff-base intermediate with DXP. 1-deoxy-D-xylulose 5-phosphate is bound by residues Gly171, 198–199, and 220–221; these read AG and NS.

This sequence belongs to the ThiG family. In terms of assembly, homotetramer. Forms heterodimers with either ThiH or ThiS.

Its subcellular location is the cytoplasm. The catalysed reaction is [ThiS sulfur-carrier protein]-C-terminal-Gly-aminoethanethioate + 2-iminoacetate + 1-deoxy-D-xylulose 5-phosphate = [ThiS sulfur-carrier protein]-C-terminal Gly-Gly + 2-[(2R,5Z)-2-carboxy-4-methylthiazol-5(2H)-ylidene]ethyl phosphate + 2 H2O + H(+). The protein operates within cofactor biosynthesis; thiamine diphosphate biosynthesis. Catalyzes the rearrangement of 1-deoxy-D-xylulose 5-phosphate (DXP) to produce the thiazole phosphate moiety of thiamine. Sulfur is provided by the thiocarboxylate moiety of the carrier protein ThiS. In vitro, sulfur can be provided by H(2)S. The sequence is that of Thiazole synthase from Hydrogenovibrio crunogenus (strain DSM 25203 / XCL-2) (Thiomicrospira crunogena).